Consider the following 138-residue polypeptide: Large ribosomal subunit protein uL16 (138 aa).

Basic residues predominate over residues 1–13 (MLQPKRRKYRKEQ). The disordered stretch occupies residues 1-24 (MLQPKRRKYRKEQKGRNTGKATRG).

This sequence belongs to the universal ribosomal protein uL16 family. In terms of assembly, part of the 50S ribosomal subunit.

Functionally, binds 23S rRNA and is also seen to make contacts with the A and possibly P site tRNAs. This is Large ribosomal subunit protein uL16 from Burkholderia lata (strain ATCC 17760 / DSM 23089 / LMG 22485 / NCIMB 9086 / R18194 / 383).